Consider the following 515-residue polypeptide: Maturase K (515 aa).

This sequence belongs to the intron maturase 2 family. MatK subfamily.

Its subcellular location is the plastid. The protein resides in the chloroplast. In terms of biological role, usually encoded in the trnK tRNA gene intron. Probably assists in splicing its own and other chloroplast group II introns. This chain is Maturase K, found in Picea engelmannii (Engelmann's spruce).